The chain runs to 334 residues: Protein-methionine-sulfoxide reductase catalytic subunit MsrP (334 aa).

Positions 1–44 (MKKNQFLKESDVTAESVFFMKRRQVLKALGISATALSLPHAAHA) form a signal peptide, tat-type signal. Mo-molybdopterin contacts are provided by residues Asn88, 91 to 92 (YE), Cys146, Thr181, Asn233, Arg238, and 249 to 251 (GIK).

The protein belongs to the MsrP family. As to quaternary structure, heterodimer of a catalytic subunit (MsrP) and a heme-binding subunit (MsrQ). Mo-molybdopterin serves as cofactor. Predicted to be exported by the Tat system. The position of the signal peptide cleavage has not been experimentally proven.

Its subcellular location is the periplasm. The catalysed reaction is L-methionyl-[protein] + a quinone + H2O = L-methionyl-(S)-S-oxide-[protein] + a quinol. It carries out the reaction L-methionyl-[protein] + a quinone + H2O = L-methionyl-(R)-S-oxide-[protein] + a quinol. In terms of biological role, part of the MsrPQ system that repairs oxidized periplasmic proteins containing methionine sulfoxide residues (Met-O), using respiratory chain electrons. Thus protects these proteins from oxidative-stress damage caused by reactive species of oxygen and chlorine generated by the host defense mechanisms. MsrPQ is essential for the maintenance of envelope integrity under bleach stress, rescuing a wide series of structurally unrelated periplasmic proteins from methionine oxidation, including the primary periplasmic chaperone SurA and the lipoprotein Pal. The catalytic subunit MsrP is non-stereospecific, being able to reduce both (R-) and (S-) diastereoisomers of methionine sulfoxide. In Escherichia coli (strain K12 / MC4100 / BW2952), this protein is Protein-methionine-sulfoxide reductase catalytic subunit MsrP.